The chain runs to 552 residues: Hyaluronan synthase 2 (552 aa).

The Cytoplasmic portion of the chain corresponds to 1–11; that stretch reads MHCERFLCILR. Residues 12 to 32 traverse the membrane as a helical segment; that stretch reads IIGTTLFGVSLLLGITAAYIV. Topologically, residues 33 to 45 are extracellular; that stretch reads GYQFIQTDNYYFS. Residues 46 to 66 form a helical membrane-spanning segment; the sequence is FGLYGAFLASHLIIQSLFAFL. Over 67–374 the chain is Cytoplasmic; that stretch reads EHRKMKKSLE…NAMWFHKHHL (308 aa). The residue at position 110 (threonine 110) is a Phosphothreonine. Lysine 190 participates in a covalent cross-link: Glycyl lysine isopeptide (Lys-Gly) (interchain with G-Cter in ubiquitin). O-linked (GlcNAc) serine glycosylation occurs at serine 221. Threonine 328 carries the post-translational modification Phosphothreonine. Residues 375 to 395 form a helical membrane-spanning segment; it reads WMTYEAIITGFFPFFLIATVI. The Extracellular segment spans residues 396–402; it reads QLFYRGK. A helical membrane pass occupies residues 403–423; sequence IWNILLFLLTVQLVGLIKSSF. At 424–429 the chain is on the cytoplasmic side; sequence ASCLRG. A helical transmembrane segment spans residues 430 to 450; the sequence is NIVMVFMSLYSVLYMSSLLPA. At 451-475 the chain is on the extracellular side; that stretch reads KMFAIATINKAGWGTSGRKTIVVNF. Residues 476–496 form a helical membrane-spanning segment; that stretch reads IGLIPVSVWFTILLGGVIFTI. The Cytoplasmic portion of the chain corresponds to 497 to 510; it reads YKESKRPFSESKQT. A helical transmembrane segment spans residues 511-531; the sequence is VLIVGTLLYACYWVMLLTLYV. Over 532–552 the chain is Extracellular; sequence VLINKCGRRKKGQQYDMVLDV.

Belongs to the NodC/HAS family. Homodimer; dimerization promotes enzymatic activity. Forms heterodimer with HAS3. Forms heterodimer with HAS1. Requires Mg(2+) as cofactor. Post-translationally, phosphorylation at Thr-328 is essential for hyaluronan synthase activity. Phosphorylation at Thr-110 is required for transport from ER to Golgi. In terms of processing, O-GlcNAcylation at Ser-221 increases the stability of HAS2 and plasma membrane localization. Ubiquitination at Lys-190; this ubiquitination is essential for hyaluronan synthase activity and homo- or hetero-oligomerization. Can also be poly-ubiquitinated. Deubiquitinated by USP17 and USP4. USP17 efficiently removes 'Lys-63'- and 'Lys-48'-linked polyubiquitin chains, whereas USP4 preferentially removes monoubiquitination and, partially, both 'Lys-63'- and 'Lys-48'-linked polyubiquitin chain. As to expression, expressed in fibroblasts.

The protein resides in the cell membrane. It localises to the endoplasmic reticulum membrane. Its subcellular location is the vesicle. It is found in the golgi apparatus membrane. The protein localises to the lysosome. The catalysed reaction is [hyaluronan](n) + UDP-N-acetyl-alpha-D-glucosamine = N-acetyl-beta-D-glucosaminyl-(1-&gt;4)-[hyaluronan](n) + UDP + H(+). It catalyses the reaction N-acetyl-beta-D-glucosaminyl-(1-&gt;4)-[hyaluronan](n) + UDP-alpha-D-glucuronate = [hyaluronan](n+1) + UDP + H(+). Its pathway is glycan biosynthesis; hyaluronan biosynthesis. Its activity is regulated as follows. Regulated by several post-translational modifications such as ubiquitination/deubiquitination, phosphorylation and O-GlcNAcylation. The enzymatic activity depends on the availability of UDP-GlcUA and UDP-GlcNAc. Functionally, catalyzes the addition of GlcNAc or GlcUA monosaccharides to the nascent hyaluronan polymer. Therefore, it is essential to hyaluronan synthesis a major component of most extracellular matrices that has a structural role in tissues architectures and regulates cell adhesion, migration and differentiation. This is one of three isoenzymes responsible for cellular hyaluronan synthesis and it is particularly responsible for the synthesis of high molecular mass hyaluronan. The polypeptide is Hyaluronan synthase 2 (Homo sapiens (Human)).